Reading from the N-terminus, the 150-residue chain is Large ribosomal subunit protein bL9 (150 aa).

It belongs to the bacterial ribosomal protein bL9 family.

In terms of biological role, binds to the 23S rRNA. This chain is Large ribosomal subunit protein bL9, found in Shewanella oneidensis (strain ATCC 700550 / JCM 31522 / CIP 106686 / LMG 19005 / NCIMB 14063 / MR-1).